A 98-amino-acid chain; its full sequence is Small ribosomal subunit protein bS20 (98 aa).

Basic residues predominate over residues 1–12 (MAPRKPSKKVGP). A disordered region spans residues 1 to 34 (MAPRKPSKKVGPQKRPSAEKRVITSKKKQLRNQS).

Belongs to the bacterial ribosomal protein bS20 family.

Binds directly to 16S ribosomal RNA. The protein is Small ribosomal subunit protein bS20 of Chlamydia muridarum (strain MoPn / Nigg).